The sequence spans 412 residues: Palmitoyltransferase ZDHHC6 (412 aa).

The Cytoplasmic segment spans residues 1–24; that stretch reads MNILSAIIVFENLHEVKRLFHWGP. The chain crosses the membrane as a helical span at residues 25–45; the sequence is IIALTVIGVCSSMAILDSIIW. Residues 46–57 lie on the Lumenal side of the membrane; sequence YWPLDTTGGSIN. A helical transmembrane segment spans residues 58–78; sequence FIMLINWTVLILYNYFNAMFV. At 79–143 the chain is on the cytoplasmic side; it reads GPGYIPLEWK…NCCGHLNHAY (65 aa). In terms of domain architecture, DHHC spans 99–149; it reads QFCRLCQGYKAPRSHHCRKCNRCVMKMDHHCPWINNCCGHLNHAYFTSFLL. The active-site S-palmitoyl cysteine intermediate is cysteine 129. A helical membrane pass occupies residues 144–164; that stretch reads FTSFLLLAPLGCIHAALIFIM. At 165-205 the chain is on the lumenal side; the sequence is TMYTQLYDRISFGWSSVKIDMSAARHIHHPIMPFSIAAFAA. A helical transmembrane segment spans residues 206 to 226; the sequence is TLFALGLALGTTIAVGMLFFI. Residues 227-412 are Cytoplasmic-facing; sequence QMKVILRNRT…NSTSEEKKEQ (186 aa). The SH3 domain occupies 313-398; sequence QRSVEYRVVE…PRRCVEKCLY (86 aa). 3 S-palmitoyl cysteine lipidation sites follow: cysteine 328, cysteine 329, and cysteine 343. The short motif at 409 to 412 is the Di-lysine motif element; the sequence is KKEQ.

Belongs to the DHHC palmitoyltransferase family.

It is found in the endoplasmic reticulum membrane. The catalysed reaction is L-cysteinyl-[protein] + hexadecanoyl-CoA = S-hexadecanoyl-L-cysteinyl-[protein] + CoA. The enzyme catalyses L-cysteinyl-[protein] + octadecanoyl-CoA = S-octadecanoyl-L-cysteinyl-[protein] + CoA. In terms of biological role, endoplasmic reticulum palmitoyl acyltransferase that probably catalyzes the addition of palmitate onto various protein substrates and is involved in a variety of cellular processes. Could also function as a stearoyltransferase. The chain is Palmitoyltransferase ZDHHC6 from Danio rerio (Zebrafish).